The primary structure comprises 331 residues: Biotin synthase (331 aa).

Residues 52-277 (PEVEVEGIVS…RTILRYAGGR (226 aa)) form the Radical SAM core domain. [4Fe-4S] cluster-binding residues include Cys-67, Cys-71, and Cys-74. The [2Fe-2S] cluster site is built by Cys-110, Cys-202, and Arg-272.

This sequence belongs to the radical SAM superfamily. Biotin synthase family. In terms of assembly, homodimer. The cofactor is [4Fe-4S] cluster. [2Fe-2S] cluster is required as a cofactor.

The catalysed reaction is (4R,5S)-dethiobiotin + (sulfur carrier)-SH + 2 reduced [2Fe-2S]-[ferredoxin] + 2 S-adenosyl-L-methionine = (sulfur carrier)-H + biotin + 2 5'-deoxyadenosine + 2 L-methionine + 2 oxidized [2Fe-2S]-[ferredoxin]. Its pathway is cofactor biosynthesis; biotin biosynthesis; biotin from 7,8-diaminononanoate: step 2/2. In terms of biological role, catalyzes the conversion of dethiobiotin (DTB) to biotin by the insertion of a sulfur atom into dethiobiotin via a radical-based mechanism. In Salinispora arenicola (strain CNS-205), this protein is Biotin synthase.